The chain runs to 895 residues: Isoleucine--tRNA ligase (895 aa).

Residues 57–67 (PYANGSIHVGH) carry the 'HIGH' region motif. Glu-549 contacts L-isoleucyl-5'-AMP. Residues 590-594 (KMSKS) carry the 'KMSKS' region motif. ATP is bound at residue Lys-593. Residues Cys-869, Cys-872, Cys-888, and Cys-891 each contribute to the Zn(2+) site.

It belongs to the class-I aminoacyl-tRNA synthetase family. IleS type 1 subfamily. Monomer. Zn(2+) serves as cofactor.

Its subcellular location is the cytoplasm. The catalysed reaction is tRNA(Ile) + L-isoleucine + ATP = L-isoleucyl-tRNA(Ile) + AMP + diphosphate. Its function is as follows. Catalyzes the attachment of isoleucine to tRNA(Ile). As IleRS can inadvertently accommodate and process structurally similar amino acids such as valine, to avoid such errors it has two additional distinct tRNA(Ile)-dependent editing activities. One activity is designated as 'pretransfer' editing and involves the hydrolysis of activated Val-AMP. The other activity is designated 'posttransfer' editing and involves deacylation of mischarged Val-tRNA(Ile). In Mycoplasma genitalium (strain ATCC 33530 / DSM 19775 / NCTC 10195 / G37) (Mycoplasmoides genitalium), this protein is Isoleucine--tRNA ligase.